A 108-amino-acid polypeptide reads, in one-letter code: MKIIVSILVLASLLLISSSLASATISDAFGSGAVAPAPQSKDGPALEKWCGQKCEGRCKEAGMKDRCLKYCGICCKDCQCVPSGTYGNKHECACYRDKLSSKGTPKCP.

The first 23 residues, 1–23, serve as a signal peptide directing secretion; sequence MKIIVSILVLASLLLISSSLASA.

The protein belongs to the GASA family. In terms of processing, six disulfide bonds may be present.

It localises to the secreted. Gibberellin-regulated protein that may function in hormonal controlled steps of development such as seed germination, flowering and seed maturation. The chain is Gibberellin-regulated protein 7 (GASA7) from Arabidopsis thaliana (Mouse-ear cress).